The sequence spans 53 residues: uncharacterized protein (53 aa).

Positions 14-33 (SPSSLNNNNNINSKSLQINS) are enriched in low complexity. The disordered stretch occupies residues 14–53 (SPSSLNNNNNINSKSLQINSENKSKIQNNNPLGNKGGVQF).

This is an uncharacterized protein from Dictyostelium discoideum (Social amoeba).